Reading from the N-terminus, the 74-residue chain is Putative membrane protein insertion efficiency factor (74 aa).

This sequence belongs to the UPF0161 family.

The protein resides in the cell membrane. In terms of biological role, could be involved in insertion of integral membrane proteins into the membrane. The sequence is that of Putative membrane protein insertion efficiency factor from Anoxybacillus flavithermus (strain DSM 21510 / WK1).